The chain runs to 247 residues: 3-deoxy-manno-octulosonate cytidylyltransferase (247 aa).

This sequence belongs to the KdsB family.

The protein resides in the cytoplasm. The enzyme catalyses 3-deoxy-alpha-D-manno-oct-2-ulosonate + CTP = CMP-3-deoxy-beta-D-manno-octulosonate + diphosphate. It functions in the pathway nucleotide-sugar biosynthesis; CMP-3-deoxy-D-manno-octulosonate biosynthesis; CMP-3-deoxy-D-manno-octulosonate from 3-deoxy-D-manno-octulosonate and CTP: step 1/1. It participates in bacterial outer membrane biogenesis; lipopolysaccharide biosynthesis. Functionally, activates KDO (a required 8-carbon sugar) for incorporation into bacterial lipopolysaccharide in Gram-negative bacteria. The sequence is that of 3-deoxy-manno-octulosonate cytidylyltransferase from Methylobacterium radiotolerans (strain ATCC 27329 / DSM 1819 / JCM 2831 / NBRC 15690 / NCIMB 10815 / 0-1).